A 410-amino-acid chain; its full sequence is Probable ATP-dependent RNA helicase MG308 (410 aa).

One can recognise a Helicase ATP-binding domain in the interval 26–179 (VFKLWPFQNI…KKQVINTKVI (154 aa)). Residue 39 to 46 (AETGSGKT) coordinates ATP. The DEID box motif lies at 126–129 (DEID). In terms of domain architecture, Helicase C-terminal spans 190–357 (LVKHFVVHLN…DLKFLTENNQ (168 aa)).

The protein belongs to the DEAD box helicase family.

The catalysed reaction is ATP + H2O = ADP + phosphate + H(+). This is Probable ATP-dependent RNA helicase MG308 from Mycoplasma genitalium (strain ATCC 33530 / DSM 19775 / NCTC 10195 / G37) (Mycoplasmoides genitalium).